A 106-amino-acid polypeptide reads, in one-letter code: MVNQVAQCFTVRRVWLVVVVGLLVHQTTARYVFEECPGVMGNRALHGKVTRVCEDCYNVFRDTDVLAGCRKGCFSSEMFKLCLLAMERVEEFPDFKRWIGILNAGR.

An N-terminal signal peptide occupies residues M1–A29. 3 disulfide bridges follow: C36-C73, C53-C69, and C56-C82. Position 104 is an alanine amide (A104). The propeptide occupies G105–R106.

In terms of tissue distribution, sinus gland of the eyestalk.

The protein localises to the secreted. Functionally, inhibits Y-organs where molting hormone (ecdysteroid) is secreted. A molting cycle is initiated when MIH secretion diminishes or stops. The sequence is that of Molt-inhibiting hormone from Faxonius limosus (Spinycheek crayfish).